The sequence spans 258 residues: Cytochrome b-c1 complex subunit Rieske-1, mitochondrial (258 aa).

The transit peptide at 1–46 directs the protein to the mitochondrion; the sequence is WPVRSAAPSSSAFISANHFSSDDDSSSPRSISPSLASVFLHHTRGF. The Mitochondrial matrix portion of the chain corresponds to 47–95; the sequence is SSNSVSPAHDMGLVPDLPPTVAAIKNPTSKIVYDEHNHERYPPGDPSKR. The helical transmembrane segment at 96 to 118 threads the bilayer; the sequence is AFAYFVLTGGRFVYASLMRLLIL. Residues 119 to 258 lie on the Mitochondrial intermembrane side of the membrane; it reads KFVLSMSASK…FLEENKLLIG (140 aa). The Rieske domain maps to 161–256; the sequence is RRRTEDDISL…YSFLEENKLL (96 aa). C201, H203, C220, and H223 together coordinate [2Fe-2S] cluster. C206 and C222 are oxidised to a cystine.

The protein belongs to the Rieske iron-sulfur protein family. In terms of assembly, component of the ubiquinol-cytochrome c oxidoreductase (cytochrome b-c1 complex, complex III, CIII), a multisubunit enzyme composed of 3 respiratory subunits cytochrome b, cytochrome c1 and Rieske protein, 2 core protein subunits, and several low-molecular weight protein subunits. The complex exists as an obligatory dimer and forms supercomplexes (SCs) in the inner mitochondrial membrane with cytochrome c oxidase (complex IV, CIV). [2Fe-2S] cluster serves as cofactor.

It is found in the mitochondrion inner membrane. It catalyses the reaction a quinol + 2 Fe(III)-[cytochrome c](out) = a quinone + 2 Fe(II)-[cytochrome c](out) + 2 H(+)(out). Its function is as follows. Component of the ubiquinol-cytochrome c oxidoreductase, a multisubunit transmembrane complex that is part of the mitochondrial electron transport chain which drives oxidative phosphorylation. The respiratory chain contains 3 multisubunit complexes succinate dehydrogenase (complex II, CII), ubiquinol-cytochrome c oxidoreductase (cytochrome b-c1 complex, complex III, CIII) and cytochrome c oxidase (complex IV, CIV), that cooperate to transfer electrons derived from NADH and succinate to molecular oxygen, creating an electrochemical gradient over the inner membrane that drives transmembrane transport and the ATP synthase. The cytochrome b-c1 complex catalyzes electron transfer from ubiquinol to cytochrome c, linking this redox reaction to translocation of protons across the mitochondrial inner membrane, with protons being carried across the membrane as hydrogens on the quinol. In the process called Q cycle, 2 protons are consumed from the matrix, 4 protons are released into the intermembrane space and 2 electrons are passed to cytochrome c. The Rieske protein is a catalytic core subunit containing a [2Fe-2S] iron-sulfur cluster. It cycles between 2 conformational states during catalysis to transfer electrons from the quinol bound in the Q(0) site in cytochrome b to cytochrome c1. The polypeptide is Cytochrome b-c1 complex subunit Rieske-1, mitochondrial (Nicotiana tabacum (Common tobacco)).